The primary structure comprises 132 residues: Chemokine-like protein TAFA-5 (132 aa).

Residues 1–43 form the signal peptide; sequence MAPSPRTSSRQDATALPSMSSTFWAFMILASLLIAYCSQLAAG. Asparagine 113 is a glycosylation site (N-linked (GlcNAc...) asparagine).

Belongs to the TAFA family. Expressed in the subcutaneous, brown, epididymal and perirenal adipose tissue (at protein level).

The protein resides in the secreted. Functionally, acts as a chemokine-like protein by regulating cell proliferation and migration through activation of G protein-coupled receptors (GPCRs), such as S1PR2 and FPR2. Stimulates chemotactic migration of macrophages mediated by the MAPK3/ERK1 and AKT1 pathway. Blocks TNFSF11/RANKL-induced osteoclast formation from macrophages by inhibiting up-regulation of osteoclast fusogenic and differentiation genes. Stimulation of macrophage migration and inhibition of osteoclast formation is mediated through the GPCR FPR2. Acts as an adipokine by negatively regulating vascular smooth muscle cell (VSMC) proliferation and migration in response to platelet-derived growth factor stimulation via GPCR S1PR2 and G protein GNA12/GNA13-transmitted RHOA signaling. Inhibits injury-induced cell proliferation and neointima formation in the femoral arteries. This chain is Chemokine-like protein TAFA-5 (Tafa5), found in Mus musculus (Mouse).